Reading from the N-terminus, the 97-residue chain is MKLRPLHDRVIVKRNEVELKSAGGIVLTGSAAGKSTRGVVLSVGKGRILDNGSIKKLDVKVGDIVIFNEGYGAKTETINNEEVLILTENDILAIVEK.

The protein belongs to the GroES chaperonin family. As to quaternary structure, heptamer of 7 subunits arranged in a ring. Interacts with the chaperonin GroEL.

It localises to the cytoplasm. Together with the chaperonin GroEL, plays an essential role in assisting protein folding. The GroEL-GroES system forms a nano-cage that allows encapsulation of the non-native substrate proteins and provides a physical environment optimized to promote and accelerate protein folding. GroES binds to the apical surface of the GroEL ring, thereby capping the opening of the GroEL channel. The protein is Co-chaperonin GroES of Buchnera aphidicola subsp. Cinara cedri (strain Cc).